The primary structure comprises 133 residues: MPSINPLANALATLYNNEMRRNKQALITPASKLIISVLRVMQKEGYIGEFEYIDDGRAGKIIVQLLGRINKCGPISPRYPLDYNGLLRLPDYIRKYLPSKEIGIIIISTPKGVMSHRDGIREKIGGVTLGYVY.

This sequence belongs to the universal ribosomal protein uS8 family. In terms of assembly, part of the 30S ribosomal subunit.

Its function is as follows. One of the primary rRNA binding proteins, it binds directly to 16S rRNA central domain where it helps coordinate assembly of the platform of the 30S subunit. The sequence is that of Small ribosomal subunit protein uS8 from Sulfolobus acidocaldarius (strain ATCC 33909 / DSM 639 / JCM 8929 / NBRC 15157 / NCIMB 11770).